The chain runs to 574 residues: Proline--tRNA ligase (574 aa).

This sequence belongs to the class-II aminoacyl-tRNA synthetase family. ProS type 1 subfamily. In terms of assembly, homodimer.

It is found in the cytoplasm. It catalyses the reaction tRNA(Pro) + L-proline + ATP = L-prolyl-tRNA(Pro) + AMP + diphosphate. Catalyzes the attachment of proline to tRNA(Pro) in a two-step reaction: proline is first activated by ATP to form Pro-AMP and then transferred to the acceptor end of tRNA(Pro). As ProRS can inadvertently accommodate and process non-cognate amino acids such as alanine and cysteine, to avoid such errors it has two additional distinct editing activities against alanine. One activity is designated as 'pretransfer' editing and involves the tRNA(Pro)-independent hydrolysis of activated Ala-AMP. The other activity is designated 'posttransfer' editing and involves deacylation of mischarged Ala-tRNA(Pro). The misacylated Cys-tRNA(Pro) is not edited by ProRS. In Oleidesulfovibrio alaskensis (strain ATCC BAA-1058 / DSM 17464 / G20) (Desulfovibrio alaskensis), this protein is Proline--tRNA ligase.